The chain runs to 381 residues: ATP synthase subunit a (381 aa).

Positions Pro24–His73 are disordered. Residues Ala47–Ala59 show a composition bias toward low complexity. Positions Ala60 to His73 are enriched in basic and acidic residues. 6 consecutive transmembrane segments (helical) span residues Lys128–Val148, Leu190–Ala210, Asn215–Ile235, Leu255–Phe275, Phe290–Gly310, and Leu316–Leu336. Residues Asp351–His360 show a composition bias toward basic and acidic residues. The tract at residues Asp351 to Gly381 is disordered.

This sequence belongs to the ATPase A chain family. In terms of assembly, F-type ATPases have 2 components, CF(1) - the catalytic core - and CF(0) - the membrane proton channel. CF(1) has five subunits: alpha(3), beta(3), gamma(1), delta(1), epsilon(1). CF(0) has three main subunits: a(1), b(2) and c(9-12). The alpha and beta chains form an alternating ring which encloses part of the gamma chain. CF(1) is attached to CF(0) by a central stalk formed by the gamma and epsilon chains, while a peripheral stalk is formed by the delta and b chains.

It is found in the cell inner membrane. In terms of biological role, key component of the proton channel; it plays a direct role in the translocation of protons across the membrane. The polypeptide is ATP synthase subunit a (Anaeromyxobacter dehalogenans (strain 2CP-C)).